A 166-amino-acid chain; its full sequence is Interferon gamma (166 aa).

Positions 1–23 (MKYTSYFLALLLCGLLGFSGSYG) are cleaved as a signal peptide. Position 24 is a pyrrolidone carboxylic acid (Gln-24). Asn-39 and Asn-106 each carry an N-linked (GlcNAc...) asparagine glycan.

It belongs to the type II (or gamma) interferon family. Homodimer. Interacts with IFNGR1 (via extracellular domain); this interaction promotes IFNGR1 dimerization. Released primarily from activated T lymphocytes.

It localises to the secreted. Type II interferon produced by immune cells such as T-cells and NK cells that plays crucial roles in antimicrobial, antiviral, and antitumor responses by activating effector immune cells and enhancing antigen presentation. Primarily signals through the JAK-STAT pathway after interaction with its receptor IFNGR1 to affect gene regulation. Upon IFNG binding, IFNGR1 intracellular domain opens out to allow association of downstream signaling components JAK2, JAK1 and STAT1, leading to STAT1 activation, nuclear translocation and transcription of IFNG-regulated genes. Many of the induced genes are transcription factors such as IRF1 that are able to further drive regulation of a next wave of transcription. Plays a role in class I antigen presentation pathway by inducing a replacement of catalytic proteasome subunits with immunoproteasome subunits. In turn, increases the quantity, quality, and repertoire of peptides for class I MHC loading. Increases the efficiency of peptide generation also by inducing the expression of activator PA28 that associates with the proteasome and alters its proteolytic cleavage preference. Up-regulates as well MHC II complexes on the cell surface by promoting expression of several key molecules such as cathepsins B/CTSB, H/CTSH, and L/CTSL. Participates in the regulation of hematopoietic stem cells during development and under homeostatic conditions by affecting their development, quiescence, and differentiation. In Bos taurus (Bovine), this protein is Interferon gamma (IFNG).